Reading from the N-terminus, the 197-residue chain is 7-methyl-GTP pyrophosphatase (197 aa).

D69 serves as the catalytic Proton acceptor.

It belongs to the Maf family. YceF subfamily. Requires a divalent metal cation as cofactor.

Its subcellular location is the cytoplasm. It catalyses the reaction N(7)-methyl-GTP + H2O = N(7)-methyl-GMP + diphosphate + H(+). Nucleoside triphosphate pyrophosphatase that hydrolyzes 7-methyl-GTP (m(7)GTP). May have a dual role in cell division arrest and in preventing the incorporation of modified nucleotides into cellular nucleic acids. This is 7-methyl-GTP pyrophosphatase from Syntrophotalea carbinolica (strain DSM 2380 / NBRC 103641 / GraBd1) (Pelobacter carbinolicus).